The chain runs to 386 residues: Cytochrome b (386 aa).

4 helical membrane passes run T32 to M52, Y76 to G98, V113 to C133, and F179 to M199. Positions 82 and 96 each coordinate heme b. The heme b site is built by H183 and H197. H202 lines the a ubiquinone pocket. The next 4 membrane-spanning stretches (helical) occupy residues F225–F245, L289–D309, F321–Q341, and F348–P368.

This sequence belongs to the cytochrome b family. As to quaternary structure, fungal cytochrome b-c1 complex contains 10 subunits; 3 respiratory subunits, 2 core proteins and 5 low-molecular weight proteins. Cytochrome b-c1 complex is a homodimer. It depends on heme b as a cofactor.

Its subcellular location is the mitochondrion inner membrane. Component of the ubiquinol-cytochrome c reductase complex (complex III or cytochrome b-c1 complex) that is part of the mitochondrial respiratory chain. The b-c1 complex mediates electron transfer from ubiquinol to cytochrome c. Contributes to the generation of a proton gradient across the mitochondrial membrane that is then used for ATP synthesis. This is Cytochrome b (COB) from Wickerhamomyces pijperi (Yeast).